A 288-amino-acid chain; its full sequence is 4-diphosphocytidyl-2-C-methyl-D-erythritol kinase (288 aa).

Lysine 8 is a catalytic residue. 92 to 102 provides a ligand contact to ATP; that stretch reads PVAAGMAGGST. Aspartate 134 is a catalytic residue.

Belongs to the GHMP kinase family. IspE subfamily.

It catalyses the reaction 4-CDP-2-C-methyl-D-erythritol + ATP = 4-CDP-2-C-methyl-D-erythritol 2-phosphate + ADP + H(+). The protein operates within isoprenoid biosynthesis; isopentenyl diphosphate biosynthesis via DXP pathway; isopentenyl diphosphate from 1-deoxy-D-xylulose 5-phosphate: step 3/6. Catalyzes the phosphorylation of the position 2 hydroxy group of 4-diphosphocytidyl-2C-methyl-D-erythritol. The polypeptide is 4-diphosphocytidyl-2-C-methyl-D-erythritol kinase (Clostridium perfringens (strain SM101 / Type A)).